The primary structure comprises 64 residues: Small ribosomal subunit protein bS21 (64 aa).

The interval 26-64 (DGILSEARRRTRFERPPTRRKRKDAAKRRLAIKAARKAT) is disordered. A compositionally biased stretch (basic residues) spans 43-64 (TRRKRKDAAKRRLAIKAARKAT).

Belongs to the bacterial ribosomal protein bS21 family.

This Dehalococcoides mccartyi (strain ATCC BAA-2100 / JCM 16839 / KCTC 5957 / BAV1) protein is Small ribosomal subunit protein bS21.